Reading from the N-terminus, the 76-residue chain is Tautomerase PptA (76 aa).

Residue P2 is the Proton acceptor; via imino nitrogen of the active site.

Belongs to the 4-oxalocrotonate tautomerase family. PptA subfamily. Homodimer.

The protein resides in the cytoplasm. The sequence is that of Tautomerase PptA from Pectobacterium atrosepticum (strain SCRI 1043 / ATCC BAA-672) (Erwinia carotovora subsp. atroseptica).